The chain runs to 333 residues: Foldase protein PrsA (333 aa).

The N-terminal stretch at 1–22 is a signal peptide; that stretch reads MKSAKQIATALLVGMFTFSAVG. Cys-23 carries N-palmitoyl cysteine lipidation. Residue Cys-23 is the site of S-diacylglycerol cysteine attachment. The PpiC domain occupies 192–283; the sequence is PNTVHLAHIL…FGWHVIKCIK (92 aa).

It belongs to the PrsA family.

The protein resides in the cell membrane. It catalyses the reaction [protein]-peptidylproline (omega=180) = [protein]-peptidylproline (omega=0). Plays a major role in protein secretion by helping the post-translocational extracellular folding of several secreted proteins. The sequence is that of Foldase protein PrsA from Clostridium acetobutylicum (strain ATCC 824 / DSM 792 / JCM 1419 / IAM 19013 / LMG 5710 / NBRC 13948 / NRRL B-527 / VKM B-1787 / 2291 / W).